The primary structure comprises 841 residues: DNA mismatch repair protein MutS (841 aa).

Residue 600 to 607 coordinates ATP; the sequence is GPNMAGKS.

It belongs to the DNA mismatch repair MutS family.

This protein is involved in the repair of mismatches in DNA. It is possible that it carries out the mismatch recognition step. This protein has a weak ATPase activity. This chain is DNA mismatch repair protein MutS, found in Carboxydothermus hydrogenoformans (strain ATCC BAA-161 / DSM 6008 / Z-2901).